The primary structure comprises 150 residues: uncharacterized protein (150 aa).

Residues 1–28 (MPLDVWIAFSYFIDFFQWLFMLNAEVMR) form the signal peptide.

This is an uncharacterized protein from Archaeoglobus fulgidus (strain ATCC 49558 / DSM 4304 / JCM 9628 / NBRC 100126 / VC-16).